Consider the following 693-residue polypeptide: Heat shock protein homolog SSE2 (693 aa).

The disordered stretch occupies residues 653-693; sequence LRANQETSKMNDIAEKLAEQRRARAASDDSDDNNDENMDLD. Basic and acidic residues predominate over residues 664-679; the sequence is DIAEKLAEQRRARAAS. Residues 680–693 are compositionally biased toward acidic residues; that stretch reads DDSDDNNDENMDLD.

This sequence belongs to the heat shock protein 70 family.

Functionally, has a calcium-dependent calmodulin-binding activity. The sequence is that of Heat shock protein homolog SSE2 (SSE2) from Saccharomyces cerevisiae (strain ATCC 204508 / S288c) (Baker's yeast).